The primary structure comprises 127 residues: 3-aminoacrylate deaminase RutC (127 aa).

The protein belongs to the RutC family.

It catalyses the reaction (Z)-3-aminoacrylate + H2O + H(+) = 3-oxopropanoate + NH4(+). Functionally, involved in pyrimidine catabolism. Catalyzes the deamination of 3-aminoacrylate to malonic semialdehyde, a reaction that can also occur spontaneously. RutC may facilitate the reaction and modulate the metabolic fitness, rather than catalyzing essential functions. This Pseudomonas savastanoi pv. phaseolicola (strain 1448A / Race 6) (Pseudomonas syringae pv. phaseolicola (strain 1448A / Race 6)) protein is 3-aminoacrylate deaminase RutC.